We begin with the raw amino-acid sequence, 153 residues long: UPF0266 membrane protein YE1773 (153 aa).

3 consecutive transmembrane segments (helical) span residues Ile-6–Met-26, Ile-45–Asn-65, and Glu-67–Ile-87.

This sequence belongs to the UPF0266 family.

It is found in the cell inner membrane. The protein is UPF0266 membrane protein YE1773 of Yersinia enterocolitica serotype O:8 / biotype 1B (strain NCTC 13174 / 8081).